Reading from the N-terminus, the 617-residue chain is Formin-binding protein 1 (617 aa).

The interval 1-79 (MSWGTELWDQ…CKAFISNLNE (79 aa)) is required for self-association and induction of membrane tubulation. Positions 1 to 264 (MSWGTELWDQ…AAESIDQKND (264 aa)) constitute an F-BAR domain. Positions 1 to 335 (MSWGTELWDQ…KKNKLMSLLT (335 aa)) are interaction with microtubules. N6-acetyllysine is present on residues K66 and K110. Residues 67-259 (YTSCKAFISN…DGIVKAAESI (193 aa)) adopt a coiled-coil conformation. The required for self-association and induction of membrane tubulation stretch occupies residues 251–617 (GIVKAAESID…VCLDKNAKDS (367 aa)). Disordered regions lie at residues 280–315 (GDIEFEDYTQPMKRTVSDNSLSNSRGEGKPDLKFGG) and 333–366 (LLTSPHQPPPPPPASASPSAVPNGPQSPKQQKEP). S296 and S299 each carry phosphoserine. Residues 338-347 (HQPPPPPPAS) show a composition bias toward pro residues. A phosphoserine mark is found at S349 and S359. A coiled-coil region spans residues 398 to 490 (TPEDFSNLPP…EVEGRLPARS (93 aa)). The tract at residues 400-552 (EDFSNLPPEQ…FDDEEPLPAI (153 aa)) is interaction with RND2. The region spanning 404–481 (NLPPEQRRKK…TQKFEAWLAE (78 aa)) is the REM-1 domain. The disordered stretch occupies residues 486–531 (LPARSEQARRQSGLYDSQNPPTVNNCAQDRESPDGSYTEEQSQESE). Residues 495–617 (RQSGLYDSQN…VCLDKNAKDS (123 aa)) are interaction with PDE6G. The residue at position 497 (S497) is a Phosphoserine. Over residues 499-512 (LYDSQNPPTVNNCA) the composition is skewed to polar residues. Y500 carries the post-translational modification Phosphotyrosine. The segment at 514-617 (DRESPDGSYT…VCLDKNAKDS (104 aa)) is required for interaction with TNKS. S521 bears the Phosphoserine mark. Residues 535 to 617 (LATDFDDEFD…VCLDKNAKDS (83 aa)) form an interaction with DNM1 and DNM3 region. In terms of domain architecture, SH3 spans 550 to 611 (PAIGTCKALY…PTSYVEVCLD (62 aa)). Positions 550-617 (PAIGTCKALY…VCLDKNAKDS (68 aa)) are interaction with ARHGAP17, DAAM1, DIAPH1 and DIAPH2. The segment at 553–609 (GTCKALYTFEGQNEGTISVVEGETLYVIEEDKGDGWTRIRRNEDEEGYVPTSYVEVC) is interaction with DNM2 and WASL. The tract at residues 553–610 (GTCKALYTFEGQNEGTISVVEGETLYVIEEDKGDGWTRIRRNEDEEGYVPTSYVEVCL) is interaction with FASLG.

Belongs to the FNBP1 family. Interacts specifically with GTP-bound RND2 and CDC42. Interacts with PDE6G and microtubules. Homodimerizes, the dimers can polymerize end-to-end to form filamentous structures. Interacts with AKAP9, ARHGAP17, DAAM1, DIAPH1, DIAPH2, DNM1, DNM2, DNM3, FASLG/FASL, SNX2 and WASL/N-WASP. May interact with TNKS. In terms of tissue distribution, very highly expressed in the epithelial cells of the gastrointestinal tract, respiratory, reproductive and urinary systems. Also highly expressed in brown adipose tissue, cardiomyocytes, enteric ganglia and glucagon producing cells of the pancreas. Expressed in germ cells of the testis and all regions of the brain.

Its subcellular location is the cytoplasm. It localises to the cytoskeleton. The protein localises to the cell cortex. The protein resides in the lysosome. It is found in the cytoplasmic vesicle. Its subcellular location is the cell membrane. It localises to the membrane. The protein localises to the clathrin-coated pit. Functionally, may act as a link between RND2 signaling and regulation of the actin cytoskeleton. Required to coordinate membrane tubulation with reorganization of the actin cytoskeleton during the late stage of clathrin-mediated endocytosis. Binds to lipids such as phosphatidylinositol 4,5-bisphosphate and phosphatidylserine and promotes membrane invagination and the formation of tubules. Also enhances actin polymerization via the recruitment of WASL/N-WASP, which in turn activates the Arp2/3 complex. Actin polymerization may promote the fission of membrane tubules to form endocytic vesicles. May be required for the lysosomal retention of FASLG/FASL. In Homo sapiens (Human), this protein is Formin-binding protein 1 (FNBP1).